A 136-amino-acid polypeptide reads, in one-letter code: Ribonuclease VapC1 (136 aa).

A PINc domain is found at 18–129 (ILVDTSVLID…KKHFERLKEF (112 aa)). Residues Asp21 and Asp101 each coordinate Mg(2+).

The protein belongs to the PINc/VapC protein family. Requires Mg(2+) as cofactor.

In terms of biological role, toxic component of a type II toxin-antitoxin (TA) system. An RNase. Its cognate antitoxin is VapB1. The sequence is that of Ribonuclease VapC1 from Methanocaldococcus jannaschii (strain ATCC 43067 / DSM 2661 / JAL-1 / JCM 10045 / NBRC 100440) (Methanococcus jannaschii).